The sequence spans 198 residues: GTP cyclohydrolase-2 (198 aa).

52–56 (RMHSE) contacts GTP. Zn(2+) is bound by residues C57, C68, and C70. GTP is bound by residues Q73, 94–96 (EGR), and T116. Catalysis depends on D128, which acts as the Proton acceptor. R130 functions as the Nucleophile in the catalytic mechanism. Residues T151 and K156 each coordinate GTP.

Belongs to the GTP cyclohydrolase II family. Zn(2+) serves as cofactor.

The enzyme catalyses GTP + 4 H2O = 2,5-diamino-6-hydroxy-4-(5-phosphoribosylamino)-pyrimidine + formate + 2 phosphate + 3 H(+). It participates in cofactor biosynthesis; riboflavin biosynthesis; 5-amino-6-(D-ribitylamino)uracil from GTP: step 1/4. In terms of biological role, catalyzes the conversion of GTP to 2,5-diamino-6-ribosylamino-4(3H)-pyrimidinone 5'-phosphate (DARP), formate and pyrophosphate. The polypeptide is GTP cyclohydrolase-2 (Vibrio parahaemolyticus serotype O3:K6 (strain RIMD 2210633)).